The sequence spans 667 residues: DNA ligase (667 aa).

Residues 32-36, 81-82, and Glu-111 contribute to the NAD(+) site; these read DSVYD and SL. The N6-AMP-lysine intermediate role is filled by Lys-113. NAD(+) is bound by residues Arg-134, Glu-168, Lys-285, and Lys-309. 4 residues coordinate Zn(2+): Cys-403, Cys-406, Cys-421, and Cys-426. Residues 588–667 enclose the BRCT domain; that stretch reads VGDNPFAGKT…DNLIEQLNLI (80 aa).

The protein belongs to the NAD-dependent DNA ligase family. LigA subfamily. Mg(2+) serves as cofactor. It depends on Mn(2+) as a cofactor.

The catalysed reaction is NAD(+) + (deoxyribonucleotide)n-3'-hydroxyl + 5'-phospho-(deoxyribonucleotide)m = (deoxyribonucleotide)n+m + AMP + beta-nicotinamide D-nucleotide.. DNA ligase that catalyzes the formation of phosphodiester linkages between 5'-phosphoryl and 3'-hydroxyl groups in double-stranded DNA using NAD as a coenzyme and as the energy source for the reaction. It is essential for DNA replication and repair of damaged DNA. This Lysinibacillus sphaericus (strain C3-41) protein is DNA ligase.